We begin with the raw amino-acid sequence, 345 residues long: Leucine zipper protein 2 (345 aa).

The signal sequence occupies residues M1–S19. A coiled-coil region spans residues L16–Q211. A glycan (N-linked (GlcNAc...) asparagine) is linked at N133. Residues L164–L192 are leucine-zipper. Residues P223–L345 form a disordered region. Over residues G261–R277 the composition is skewed to basic and acidic residues. Residues P298 to L313 are compositionally biased toward polar residues. N301 carries N-linked (GlcNAc...) asparagine glycosylation.

As to expression, expression found only in the brain and spinal cord.

The protein resides in the secreted. This is Leucine zipper protein 2 (Luzp2) from Mus musculus (Mouse).